Reading from the N-terminus, the 457-residue chain is Cation efflux system protein CusC (457 aa).

A signal peptide spans 1–17 (MSPCKLLPFCVALALTG). Cys-18 carries N-palmitoyl cysteine lipidation. The S-diacylglycerol cysteine moiety is linked to residue Cys-18.

It belongs to the outer membrane factor (OMF) (TC 1.B.17) family. In terms of assembly, homotrimer. Component of the cus efflux system composed of CusA, CusB, CusC and CusF.

Its subcellular location is the cell outer membrane. Forms pores that allow passive diffusion of cations across the outer membrane. Part of a cation efflux system that mediates resistance to copper and silver. In pathogenic strains it allows the bacteria to invade brain microvascular endothelial cells (BMEC) thus allowing it to cross the blood-brain barrier and cause neonatal meningitis. In Escherichia coli (strain K12), this protein is Cation efflux system protein CusC (cusC).